Reading from the N-terminus, the 213-residue chain is Pyridoxine/pyridoxamine 5'-phosphate oxidase (213 aa).

FMN is bound by residues 60-65 (RMVLMK), 75-76 (YS), Lys82, and Gln104. Lys65 contributes to the substrate binding site. 2 residues coordinate substrate: Tyr122 and Arg126. FMN-binding positions include 139-140 (QS) and Trp184. Residue 190-192 (RLH) coordinates substrate. An FMN-binding site is contributed by Arg194.

This sequence belongs to the pyridoxamine 5'-phosphate oxidase family. As to quaternary structure, homodimer. The cofactor is FMN.

The enzyme catalyses pyridoxamine 5'-phosphate + O2 + H2O = pyridoxal 5'-phosphate + H2O2 + NH4(+). It carries out the reaction pyridoxine 5'-phosphate + O2 = pyridoxal 5'-phosphate + H2O2. It participates in cofactor metabolism; pyridoxal 5'-phosphate salvage; pyridoxal 5'-phosphate from pyridoxamine 5'-phosphate: step 1/1. Its pathway is cofactor metabolism; pyridoxal 5'-phosphate salvage; pyridoxal 5'-phosphate from pyridoxine 5'-phosphate: step 1/1. In terms of biological role, catalyzes the oxidation of either pyridoxine 5'-phosphate (PNP) or pyridoxamine 5'-phosphate (PMP) into pyridoxal 5'-phosphate (PLP). The protein is Pyridoxine/pyridoxamine 5'-phosphate oxidase of Nitrobacter hamburgensis (strain DSM 10229 / NCIMB 13809 / X14).